The chain runs to 557 residues: CCR4-NOT transcription complex subunit 6 (557 aa).

4 LRR repeats span residues histidine 52–leucine 73, asparagine 75–methionine 96, serine 98–phenylalanine 120, and glutamine 121–proline 143. The interval leucine 153–arginine 557 is nuclease domain. Glutamate 240 is a Mg(2+) binding site. Positions 240, 276, 361, and 366 each coordinate substrate. Aspartate 412 contributes to the Mg(2+) binding site. The active-site Proton donor/acceptor is aspartate 412. Positions 414, 481, and 486 each coordinate substrate.

This sequence belongs to the CCR4/nocturin family. In terms of assembly, component of the CCR4-NOT complex; distinct complexes seem to exist that differ in the participation of probably mutually exclusive catalytic subunits; the complex contains two deadenylase subunits, CNOT6 or CNOT6L, and CNOT7 or CNOT8. Interacts with CNOT7 and CNOT8. Interacts with UNR. Interacts with ZFP36L1 (via N-terminus). Interacts with ZNF335. It depends on Mg(2+) as a cofactor.

The protein resides in the cytoplasm. It localises to the nucleus. It catalyses the reaction Exonucleolytic cleavage of poly(A) to 5'-AMP.. Functionally, poly(A) nuclease with 3'-5' RNase activity. Catalytic component of the CCR4-NOT complex which is one of the major cellular mRNA deadenylases and is linked to various cellular processes including bulk mRNA degradation, miRNA-mediated repression, translational repression during translational initiation and general transcription regulation. Additional complex functions may be a consequence of its influence on mRNA expression. Involved in mRNA decay mediated by the major-protein-coding determinant of instability (mCRD) of the FOS gene in the cytoplasm. In the presence of ZNF335, enhances ligand-dependent transcriptional activity of nuclear hormone receptors. Mediates cell proliferation and cell survival and prevents cellular senescence. This chain is CCR4-NOT transcription complex subunit 6 (Cnot6), found in Mus musculus (Mouse).